The chain runs to 423 residues: Serine hydroxymethyltransferase (423 aa).

(6S)-5,6,7,8-tetrahydrofolate is bound by residues L120 and 124-126 (GHL). The residue at position 229 (K229) is an N6-(pyridoxal phosphate)lysine. Residue 353–355 (SPF) coordinates (6S)-5,6,7,8-tetrahydrofolate.

The protein belongs to the SHMT family. As to quaternary structure, homodimer. Pyridoxal 5'-phosphate is required as a cofactor.

Its subcellular location is the cytoplasm. It catalyses the reaction (6R)-5,10-methylene-5,6,7,8-tetrahydrofolate + glycine + H2O = (6S)-5,6,7,8-tetrahydrofolate + L-serine. It participates in one-carbon metabolism; tetrahydrofolate interconversion. Its pathway is amino-acid biosynthesis; glycine biosynthesis; glycine from L-serine: step 1/1. Its function is as follows. Catalyzes the reversible interconversion of serine and glycine with tetrahydrofolate (THF) serving as the one-carbon carrier. This reaction serves as the major source of one-carbon groups required for the biosynthesis of purines, thymidylate, methionine, and other important biomolecules. Also exhibits THF-independent aldolase activity toward beta-hydroxyamino acids, producing glycine and aldehydes, via a retro-aldol mechanism. This chain is Serine hydroxymethyltransferase, found in Synechococcus sp. (strain RCC307).